We begin with the raw amino-acid sequence, 190 residues long: Ribosome hibernation promotion factor (190 aa).

The protein belongs to the HPF/YfiA ribosome-associated protein family. Long HPF subfamily. As to quaternary structure, interacts with 100S ribosomes.

The protein localises to the cytoplasm. Functionally, required for dimerization of active 70S ribosomes into 100S ribosomes in stationary phase; 100S ribosomes are translationally inactive and sometimes present during exponential growth. In Staphylococcus aureus (strain COL), this protein is Ribosome hibernation promotion factor.